Reading from the N-terminus, the 248-residue chain is Ubiquinone biosynthesis O-methyltransferase (248 aa).

Arginine 41, glycine 72, aspartate 93, and methionine 136 together coordinate S-adenosyl-L-methionine.

It belongs to the methyltransferase superfamily. UbiG/COQ3 family.

It catalyses the reaction a 3-demethylubiquinol + S-adenosyl-L-methionine = a ubiquinol + S-adenosyl-L-homocysteine + H(+). The catalysed reaction is a 3-(all-trans-polyprenyl)benzene-1,2-diol + S-adenosyl-L-methionine = a 2-methoxy-6-(all-trans-polyprenyl)phenol + S-adenosyl-L-homocysteine + H(+). Its pathway is cofactor biosynthesis; ubiquinone biosynthesis. In terms of biological role, O-methyltransferase that catalyzes the 2 O-methylation steps in the ubiquinone biosynthetic pathway. The protein is Ubiquinone biosynthesis O-methyltransferase of Brucella anthropi (strain ATCC 49188 / DSM 6882 / CCUG 24695 / JCM 21032 / LMG 3331 / NBRC 15819 / NCTC 12168 / Alc 37) (Ochrobactrum anthropi).